The primary structure comprises 61 residues: UPF0434 protein Nmul_A1027 (61 aa).

Belongs to the UPF0434 family.

The chain is UPF0434 protein Nmul_A1027 from Nitrosospira multiformis (strain ATCC 25196 / NCIMB 11849 / C 71).